The primary structure comprises 699 residues: Elongation factor G 1 (699 aa).

The tr-type G domain occupies 8 to 290; it reads ERYRNIGICA…AVIEYLPSPT (283 aa). Residues 17–24, 88–92, and 142–145 contribute to the GTP site; these read AHVDAGKT, DTPGH, and NKMD.

The protein belongs to the TRAFAC class translation factor GTPase superfamily. Classic translation factor GTPase family. EF-G/EF-2 subfamily.

Its subcellular location is the cytoplasm. In terms of biological role, catalyzes the GTP-dependent ribosomal translocation step during translation elongation. During this step, the ribosome changes from the pre-translocational (PRE) to the post-translocational (POST) state as the newly formed A-site-bound peptidyl-tRNA and P-site-bound deacylated tRNA move to the P and E sites, respectively. Catalyzes the coordinated movement of the two tRNA molecules, the mRNA and conformational changes in the ribosome. The chain is Elongation factor G 1 from Hahella chejuensis (strain KCTC 2396).